The sequence spans 227 residues: Class I hydrophobin A (227 aa).

Positions 1 to 18 (MQFSLSAIVLGLAATVYA) are cleaved as a signal peptide. Asn-50 carries an N-linked (GlcNAc...) asparagine glycan. 3 cysteine pairs are disulfide-bonded: Cys-60–Cys-138, Cys-68–Cys-132, and Cys-69–Cys-109.

It belongs to the fungal hydrophobin family.

Its subcellular location is the secreted. It localises to the cell wall. Functionally, aerial growth, conidiation, and dispersal of filamentous fungi in the environment rely upon a capability of their secreting small amphipathic proteins called hydrophobins (HPBs) with low sequence identity. Class I can self-assemble into an outermost layer of rodlet bundles on aerial cell surfaces, conferring cellular hydrophobicity that supports fungal growth, development and dispersal; whereas Class II form highly ordered films at water-air interfaces through intermolecular interactions but contribute nothing to the rodlet structure. In P.expansum, hydrophobins contribute to germination, tolerance to cold stress and mycotoxins patulin and citrinin production. HfbA and HfbB are essential for fungal surface hydrophobicity and HfbA mediates air and water dispersal. The protein is Class I hydrophobin A of Penicillium expansum (Blue mold rot fungus).